A 325-amino-acid chain; its full sequence is Elongation factor P--(R)-beta-lysine ligase (325 aa).

Substrate is bound at residue 76 to 78 (SPE). Residues 100–102 (RNE) and asparagine 109 each bind ATP. Residue tyrosine 118 participates in substrate binding. 244–245 (EL) is a binding site for ATP. Glutamate 251 contacts substrate. Residue glycine 300 coordinates ATP.

Belongs to the class-II aminoacyl-tRNA synthetase family. EpmA subfamily. As to quaternary structure, homodimer.

The enzyme catalyses D-beta-lysine + L-lysyl-[protein] + ATP = N(6)-((3R)-3,6-diaminohexanoyl)-L-lysyl-[protein] + AMP + diphosphate + H(+). In terms of biological role, with EpmB is involved in the beta-lysylation step of the post-translational modification of translation elongation factor P (EF-P) on 'Lys-34'. Catalyzes the ATP-dependent activation of (R)-beta-lysine produced by EpmB, forming a lysyl-adenylate, from which the beta-lysyl moiety is then transferred to the epsilon-amino group of EF-P 'Lys-34'. The chain is Elongation factor P--(R)-beta-lysine ligase from Escherichia fergusonii (strain ATCC 35469 / DSM 13698 / CCUG 18766 / IAM 14443 / JCM 21226 / LMG 7866 / NBRC 102419 / NCTC 12128 / CDC 0568-73).